The following is a 297-amino-acid chain: HTH-type transcriptional regulator ArgP (297 aa).

An HTH lysR-type domain is found at 4 to 60; that stretch reads PDYRTLQALDAVIRERGFERAAQKLCITQSAVSQRIKQLENMFGQPLLVRTVPPRPT. A DNA-binding region (H-T-H motif) is located at residues 21–40; it reads FERAAQKLCITQSAVSQRIK.

Belongs to the LysR transcriptional regulatory family. As to quaternary structure, homodimer.

Its function is as follows. Controls the transcription of genes involved in arginine and lysine metabolism. This chain is HTH-type transcriptional regulator ArgP, found in Klebsiella pneumoniae subsp. pneumoniae (strain ATCC 700721 / MGH 78578).